A 376-amino-acid polypeptide reads, in one-letter code: TATA box-binding protein-like 2 (376 aa).

A disordered region spans residues 103 to 184 (PDEVTQENKD…SDSLSLASIT (82 aa)). Residues 108–122 (QENKDQPVISKHETE) show a composition bias toward basic and acidic residues. Residues 126–159 (ESQSPQSRLPSPSEQDVGLGLNSSSLSNSHSQLH) are compositionally biased toward low complexity. Positions 175–184 (SDSLSLASIT) are enriched in polar residues.

The protein belongs to the TBP family. Interacts with TAF3.

It is found in the cytoplasm. The protein localises to the nucleus. Transcription factor required in complex with TAF3 for the differentiation of myoblasts into myocytes. The complex replaces TFIID at specific promoters at an early stage in the differentiation process. The chain is TATA box-binding protein-like 2 from Pan troglodytes (Chimpanzee).